Here is a 445-residue protein sequence, read N- to C-terminus: UPF0210 protein SSU05_0296 (445 aa).

It belongs to the UPF0210 family. As to quaternary structure, homodimer.

The protein is UPF0210 protein SSU05_0296 of Streptococcus suis (strain 05ZYH33).